The chain runs to 256 residues: MIKRVNKLVIGISLLFLVISITAGCGMGKEEEIKKSFEKTLSMYPIKNLEDLYDKKGYRDDQFDKNDKGTWIVRSSMSIQPNGKDMNVKGMVLYMIRNTRTTNGYYYVDVIEREDKGIHRDNEKRYPVKMVDNKIIPTKEIEDEKIKKEIENFKFFVQYGNFKDLSKYKDGDISYNPEAPIYSAKYQLTNNDYNVKQLRKRYNIPTNKAPKLLLKGTGNLKGSSVGYKDIEFTFVEKKGENIYFSDSLHLEPSEDK.

Residues 1-24 (MIKRVNKLVIGISLLFLVISITAG) form the signal peptide. C25 is lipidated: N-palmitoyl cysteine. A lipid anchor (S-diacylglycerol cysteine) is attached at C25.

The protein belongs to the staphylococcal tandem lipoprotein family.

The protein resides in the cell membrane. This is an uncharacterized protein from Staphylococcus aureus (strain bovine RF122 / ET3-1).